The sequence spans 461 residues: Ribonuclease inhibitor (461 aa).

Residue Ser2 is modified to N-acetylserine. The segment at 2 to 11 is 2 X 5 AA tandem repeats of S-L-D-I-Q; that stretch reads SLDIQSLDIQ. LRR repeat units follow at residues 20-48, 49-76, 77-105, 106-133, 134-162, 163-190, 191-219, 220-247, 248-276, 277-304, 305-333, 334-361, 362-390, 391-418, and 419-447; these read WAEL…CKDI, SSAL…VHCV, LQGL…CGVL, SSTL…LQLL, CEGL…CKPL, ASVL…VRVL, CQGL…CRDL, CGIV…MAEL, CPGL…CGDL, CRVL…ARLL, CETL…CSHF, SSVL…VQEL, CQGL…CSSL, AATL…ILQL, and VESV…EDRL. Ser91 carries the post-translational modification Phosphoserine.

In terms of assembly, forms high-affinity heterodimers with RNASE1, ANG and RNASE2.

The protein resides in the cytoplasm. It localises to the nucleus. In terms of biological role, ribonuclease inhibitor which inhibits RNASE1, RNASE2 and angiogenin (ANG). May play a role in redox homeostasis. Required to inhibit the cytotoxic tRNA ribonuclease activity of ANG in the cytoplasm in absence of stress. Relocates to the nucleus in response to stress, relieving inhibition of ANG in the cytoplasm, and inhibiting the angiogenic activity of ANG in the nucleus. This chain is Ribonuclease inhibitor (RNH1), found in Pan troglodytes (Chimpanzee).